A 554-amino-acid polypeptide reads, in one-letter code: Valerianol synthase TPS1E (554 aa).

Mg(2+) is bound by residues aspartate 307 and aspartate 311. The short motif at 326-330 (VQRWD) is the DDXXD motif element. Residues aspartate 452, serine 456, and glutamate 460 each contribute to the Mg(2+) site.

Belongs to the terpene synthase family. The cofactor is Mg(2+).

The catalysed reaction is (2E,6E)-farnesyl diphosphate + H2O = valerianol + diphosphate. The protein operates within secondary metabolite biosynthesis; terpenoid biosynthesis. Terpene synthase that catalyzes the biosynthesis of the terpene valerianol, which is a volatile compound of floral scent. This Camellia hiemalis (Camellia) protein is Valerianol synthase TPS1E.